We begin with the raw amino-acid sequence, 481 residues long: tRNA:m(4)X modification enzyme TRM13 homolog (481 aa).

Position 2 is an N-acetylalanine (Ala2). The CHHC U11-48K-type zinc-finger motif lies at Arg56–Glu83. 4 residues coordinate Zn(2+): Cys59, His65, His75, and Cys79. The stretch at Ser113–His140 forms a coiled coil. The disordered stretch occupies residues Glu381–Thr408.

It belongs to the methyltransferase TRM13 family.

The catalysed reaction is cytidine(4) in tRNA(Pro) + S-adenosyl-L-methionine = 2'-O-methylcytidine(4) in tRNA(Pro) + S-adenosyl-L-homocysteine + H(+). It carries out the reaction cytidine(4) in tRNA(Gly)(GCC) + S-adenosyl-L-methionine = 2'-O-methylcytidine(4) in tRNA(Gly)(GCC) + S-adenosyl-L-homocysteine + H(+). It catalyses the reaction adenosine(4) in tRNA(His) + S-adenosyl-L-methionine = 2'-O-methyladenosine(4) in tRNA(His) + S-adenosyl-L-homocysteine + H(+). Its function is as follows. tRNA methylase which 2'-O-methylates cytidine(4) in tRNA(Pro) and tRNA(Gly)(GCC), and adenosine(4) in tRNA(His). In Homo sapiens (Human), this protein is tRNA:m(4)X modification enzyme TRM13 homolog (TRMT13).